The chain runs to 940 residues: Acetyl-coenzyme A synthetase (940 aa).

The first 33 residues, 1-33 (MCCAIWSASRAPACSASQLSSSHAVRPSVVPDA), serve as a signal peptide directing secretion. A unknown region spans residues 1–289 (MCCAIWSASR…VQRSVTRLTA (289 aa)). 3 disordered regions span residues 70–127 (TARA…RPRC), 157–202 (VAPP…ADSA), and 224–274 (ASSQ…QQTC). 2 stretches are compositionally biased toward polar residues: residues 72 to 95 (RATT…TAAS) and 107 to 120 (SSIS…TSGS). 2 stretches are compositionally biased toward low complexity: residues 184-202 (TAPP…ADSA) and 224-245 (ASSQ…SGRS). The span at 258-274 (SSPTVQRNQTTVHQQTC) shows a compositional bias: polar residues. The segment at 290–940 (MSNPSHAEVP…SVFEAIRASK (651 aa)) is acetyl-coenzyme A synthetase. Residues 480–483 (RRGK) and threonine 599 each bind CoA. ATP-binding positions include 675-677 (GEP), 699-704 (DTWWQT), aspartate 796, and arginine 811. Serine 819 lines the CoA pocket. Arginine 822 serves as a coordination point for ATP. Mg(2+) is bound by residues valine 833, histidine 835, and valine 838. The residue at position 906 (lysine 906) is an N6-acetyllysine.

Belongs to the ATP-dependent AMP-binding enzyme family. Mg(2+) serves as cofactor. Post-translationally, acetylated on Lys-906 by Pat in the presence of acetyl-CoA as an acetyl donor and ATP. Acetylation results in the inactivation of the enzyme. Deacetylation by the SIR2-homolog deacetylase CobB is required to activate the enzyme.

It catalyses the reaction acetate + ATP + CoA = acetyl-CoA + AMP + diphosphate. Catalyzes the conversion of acetate into acetyl-CoA (AcCoA), an essential intermediate at the junction of anabolic and catabolic pathways. AcsA undergoes a two-step reaction. In the first half reaction, AcsA combines acetate with ATP to form acetyl-adenylate (AcAMP) intermediate. In the second half reaction, it can then transfer the acetyl group from AcAMP to the sulfhydryl group of CoA, forming the product AcCoA. The protein is Acetyl-coenzyme A synthetase (acsA) of Mycolicibacterium smegmatis (strain ATCC 700084 / mc(2)155) (Mycobacterium smegmatis).